The following is a 484-amino-acid chain: Nuclear rim protein 1 (484 aa).

Ser-3 is subject to Phosphoserine. A run of 2 helical transmembrane segments spans residues 145–165 (FTIF…MFGY) and 237–257 (IPTN…IVFL). Positions 416-457 (SSNENLEKGGAFLPNQDQNRPSKSLSPLRKTPLSARQKRFEG) are disordered. A Phosphoserine modification is found at Ser-417. Polar residues predominate over residues 430-440 (NQDQNRPSKSL). Position 474 is a phosphoserine (Ser-474).

The protein belongs to the NUR1 family. Interacts with CSM1.

It localises to the nucleus membrane. Member of a perinuclear network that controls recombination at multiple loci to maintain genome stability. Required for rDNA repeat stability. This Saccharomyces cerevisiae (strain JAY291) (Baker's yeast) protein is Nuclear rim protein 1 (NUR1).